The chain runs to 764 residues: 5-methyltetrahydropteroyltriglutamate--homocysteine methyltransferase (764 aa).

5-methyltetrahydropteroyltri-L-glutamate contacts are provided by residues 16-19 (RELK) and Lys-121. L-homocysteine-binding positions include 440 to 442 (IGS) and Glu-493. L-methionine-binding positions include 440–442 (IGS) and Glu-493. 5-methyltetrahydropteroyltri-L-glutamate is bound by residues 524-525 (RC) and Trp-570. Position 608 (Asp-608) interacts with L-homocysteine. Residue Asp-608 participates in L-methionine binding. Glu-614 is a binding site for 5-methyltetrahydropteroyltri-L-glutamate. Residues His-650, Cys-652, and Glu-674 each coordinate Zn(2+). The active-site Proton donor is the His-703. Cys-735 lines the Zn(2+) pocket.

This sequence belongs to the vitamin-B12 independent methionine synthase family. It depends on Zn(2+) as a cofactor.

It catalyses the reaction 5-methyltetrahydropteroyltri-L-glutamate + L-homocysteine = tetrahydropteroyltri-L-glutamate + L-methionine. It participates in amino-acid biosynthesis; L-methionine biosynthesis via de novo pathway; L-methionine from L-homocysteine (MetE route): step 1/1. In terms of biological role, catalyzes the transfer of a methyl group from 5-methyltetrahydrofolate to homocysteine resulting in methionine formation. The sequence is that of 5-methyltetrahydropteroyltriglutamate--homocysteine methyltransferase from Burkholderia cenocepacia (strain HI2424).